The following is a 308-amino-acid chain: uncharacterized protein (308 aa).

One can recognise an S4 RNA-binding domain in the interval 15 to 81; the sequence is MRVDTGLARL…QNTPIDIEGM (67 aa). Asp-139 is a catalytic residue.

It belongs to the pseudouridine synthase RluA family.

It carries out the reaction a uridine in RNA = a pseudouridine in RNA. This is an uncharacterized protein from Mycobacterium tuberculosis (strain CDC 1551 / Oshkosh).